A 97-amino-acid chain; its full sequence is Aspartyl/glutamyl-tRNA(Asn/Gln) amidotransferase subunit C (97 aa).

It belongs to the GatC family. In terms of assembly, heterotrimer of A, B and C subunits.

It carries out the reaction L-glutamyl-tRNA(Gln) + L-glutamine + ATP + H2O = L-glutaminyl-tRNA(Gln) + L-glutamate + ADP + phosphate + H(+). The catalysed reaction is L-aspartyl-tRNA(Asn) + L-glutamine + ATP + H2O = L-asparaginyl-tRNA(Asn) + L-glutamate + ADP + phosphate + 2 H(+). Functionally, allows the formation of correctly charged Asn-tRNA(Asn) or Gln-tRNA(Gln) through the transamidation of misacylated Asp-tRNA(Asn) or Glu-tRNA(Gln) in organisms which lack either or both of asparaginyl-tRNA or glutaminyl-tRNA synthetases. The reaction takes place in the presence of glutamine and ATP through an activated phospho-Asp-tRNA(Asn) or phospho-Glu-tRNA(Gln). This is Aspartyl/glutamyl-tRNA(Asn/Gln) amidotransferase subunit C from Sulfolobus acidocaldarius (strain ATCC 33909 / DSM 639 / JCM 8929 / NBRC 15157 / NCIMB 11770).